The following is a 65-amino-acid chain: Conotoxin Bu19 (65 aa).

Positions Met1–Ser21 are cleaved as a signal peptide. Residues Phe22–Arg48 constitute a propeptide that is removed on maturation. 2 disulfide bridges follow: Cys50/Cys56 and Cys51/Cys64. The residue at position 64 (Cys64) is a Cysteine amide.

Belongs to the conotoxin A superfamily. In terms of tissue distribution, expressed by the venom duct.

The protein localises to the secreted. This Conus bullatus (Bubble cone) protein is Conotoxin Bu19.